The chain runs to 747 residues: Mediator of RNA polymerase II transcription subunit 25 (747 aa).

The tract at residues 1-226 (MVPGSEGPAR…PRHMVLVRGL (226 aa)) is interaction with the Mediator complex. 2 disordered regions span residues 233 to 274 (GSAP…QYQV) and 299 to 390 (LGPR…PALG). 2 stretches are compositionally biased toward pro residues: residues 263–272 (QPLPPVPPQY) and 326–342 (PQLPPGPPGAPKPPPAS). The segment at 389–543 (LGGQQSVSNK…VNGIRQVITN (155 aa)) is interaction with VP16. The interaction with CREBBP stretch occupies residues 395-545 (VSNKLLAWSG…GIRQVITNHK (151 aa)). The tract at residues 548–747 (QQQKLEQQQR…MEDDILMDLI (200 aa)) is disordered. 2 interaction with RARA regions span residues 564-653 (APPG…LLNP) and 640-707 (PGAN…WPAQ). Residues 598-611 (ASGATGQPQPQGTA) show a composition bias toward low complexity. The segment covering 612–634 (QPPPGAPQGPPGAASGPPPPGPI) has biased composition (pro residues). An LXXLL motif motif is present at residues 646–650 (LRSLL). 3 stretches are compositionally biased toward pro residues: residues 652 to 664 (NPPPPQTGVPPPQ), 673 to 683 (PGAPALLPPPH), and 691 to 713 (LGPPLLHPPPAQSWPAQLPPRAP). Asymmetric dimethylarginine is present on Arg725. Residues 738–747 (MEDDILMDLI) are compositionally biased toward acidic residues.

It belongs to the Mediator complex subunit 25 family. In terms of assembly, component of the Mediator complex, which is composed of MED1, MED4, MED6, MED7, MED8, MED9, MED10, MED11, MED12, MED13, MED13L, MED14, MED15, MED16, MED17, MED18, MED19, MED20, MED21, MED22, MED23, MED24, MED25, MED26, MED27, MED29, MED30, MED31, CCNC, CDK8 and CDC2L6/CDK11. The MED12, MED13, CCNC and CDK8 subunits form a distinct module termed the CDK8 module. Mediator containing the CDK8 module is less active than Mediator lacking this module in supporting transcriptional activation. Individual preparations of the Mediator complex lacking one or more distinct subunits have been variously termed ARC, CRSP, DRIP, PC2, SMCC and TRAP. Interacts with CREBBP. Interacts with ESR1, GR, RARA, RXRA and THRB in a ligand-dependent fashion. Binds the Herpes simplex virus activator VP16. Ubiquitously expressed. Highest levels in brain, heart, kidney, peripheral leukocytes, placenta, skeletal muscle and spleen.

Its subcellular location is the nucleus. Functionally, component of the Mediator complex, a coactivator involved in the regulated transcription of nearly all RNA polymerase II-dependent genes. Mediator functions as a bridge to convey information from gene-specific regulatory proteins to the basal RNA polymerase II transcription machinery. Mediator is recruited to promoters by direct interactions with regulatory proteins and serves as a scaffold for the assembly of a functional preinitiation complex with RNA polymerase II and the general transcription factors. Required for RARA/RXRA-mediated transcription. The protein is Mediator of RNA polymerase II transcription subunit 25 (MED25) of Homo sapiens (Human).